The sequence spans 157 residues: 3-dehydroquinate dehydratase (157 aa).

The Proton acceptor role is filled by tyrosine 22. 3 residues coordinate substrate: asparagine 73, histidine 79, and aspartate 86. The active-site Proton donor is the histidine 99. Substrate contacts are provided by residues 100–101 (LS) and arginine 110.

This sequence belongs to the type-II 3-dehydroquinase family. As to quaternary structure, homododecamer.

The enzyme catalyses 3-dehydroquinate = 3-dehydroshikimate + H2O. It participates in metabolic intermediate biosynthesis; chorismate biosynthesis; chorismate from D-erythrose 4-phosphate and phosphoenolpyruvate: step 3/7. In terms of biological role, catalyzes a trans-dehydration via an enolate intermediate. This Roseiflexus castenholzii (strain DSM 13941 / HLO8) protein is 3-dehydroquinate dehydratase.